Consider the following 171-residue polypeptide: Calcium-binding allergen Ole e 8 (171 aa).

4 consecutive EF-hand domains span residues 16 to 51 (QEPN…LGSN), 52 to 87 (TSKE…ETDP), 92 to 127 (GGEN…LGER), and 128 to 163 (YAEH…KSGN). Ca(2+)-binding residues include D29, N31, D33, K35, E40, D65, D67, D69, E76, D105, D107, N109, E116, D141, D143, D145, Y147, and E152.

In terms of assembly, homodimer. As to expression, expressed in pollen.

In Olea europaea (Common olive), this protein is Calcium-binding allergen Ole e 8.